The sequence spans 74 residues: Imcroporin (74 aa).

A signal peptide spans 1–22 (MKFQYLLAVFLIVLVVTDHCQA). Lys39 bears the Lysine amide; partial mark. Positions 45–74 (QLEARFEPKQRNFRKRELDFEKLFANMPDY) are excised as a propeptide.

Belongs to the non-disulfide-bridged peptide (NDBP) superfamily. Short antimicrobial peptide (group 4) family. As to expression, expressed by the venom gland.

The protein localises to the secreted. Its subcellular location is the target cell membrane. Its function is as follows. Has potent antibacterial activity against Gram-positive bacteria M.luteus, B.thuringiensis, S.aureus and B.subtilis, but not Gram-negative bacteria. Shows a weak cytotoxicity effect against mammalian cell lines and relatively low hemolytic activity against human erythrocytes. The polypeptide is Imcroporin (Isometrus maculatus (Lesser brown scorpion)).